Reading from the N-terminus, the 225-residue chain is MAEEPTYTTEQVDELIHAGLGTVDFFLSRPIDAQSSLGKGSIPPGVTAVLTSAAEAKSKPVAAGPVKPRRKKVISNTTPYTIADNIPPEKLPINTPIPNPLLPLARPHGKMTDIDIVTGNITEGSYKGVELAKLGKQTLLTRFTSNEPVSSAGSAQDPNFKRGGANRERARGNHRREWSIAWVGDQVKVFEWCNPRCAPVTASARKFTCTCGSCPSICGECEGDH.

Residues 65 to 72 are nuclear localization signal; it reads PVKPRRKK. Residues 145 to 157 are compositionally biased toward polar residues; sequence SNEPVSSAGSAQD. The tract at residues 145-173 is disordered; it reads SNEPVSSAGSAQDPNFKRGGANRERARGN. Positions 174, 193, 197, 209, 211, 214, 218, and 221 each coordinate Zn(2+).

The protein belongs to the paramyxoviruses V protein family. In terms of assembly, interacts with host IFIH1/MDA5 and DHX58/LGP2. Forms with host DDB1, CUL4A, STAT1 and STAT2 the HPIV2 virus V-dependent complex (VDC); this complex targets host STAT2 to proteasomal degradation.

It is found in the host nucleus. In terms of biological role, plays an essential role in the inhibition of host immune response. Prevents the establishment of cellular antiviral state by blocking interferon-alpha/beta (IFN-alpha/beta) production and signaling pathway. Interacts with host IFIH1/MDA5 and DHX58/LGP2 to inhibit the transduction pathway involved in the activation of IFN-beta promoter, thus protecting the virus against cell antiviral state. Efficiently blocks type I IFN signaling following infection by targeting host STAT2 for proteasomal degradation. Also plays a role in viral growth by promoting host RhoA-induced F-actin formation. This is Non-structural protein V (P/V) from Homo sapiens (Human).